A 497-amino-acid polypeptide reads, in one-letter code: Galactose-1-phosphate uridylyltransferase (497 aa).

Belongs to the galactose-1-phosphate uridylyltransferase type 2 family.

The protein resides in the cytoplasm. The catalysed reaction is alpha-D-galactose 1-phosphate + UDP-alpha-D-glucose = alpha-D-glucose 1-phosphate + UDP-alpha-D-galactose. It participates in carbohydrate metabolism; galactose metabolism. The protein is Galactose-1-phosphate uridylyltransferase of Enterococcus faecalis (strain ATCC 700802 / V583).